The chain runs to 715 residues: Tegument protein UL46 (715 aa).

3 disordered regions span residues 432–513 (WSAG…CAAQ), 585–605 (DDAR…APYE), and 659–680 (GSAL…PSPV). The span at 444 to 455 (GPGGHRAGGGTV) shows a compositional bias: gly residues. Composition is skewed to low complexity over residues 456-467 (GKRFSGPARQRA) and 475-488 (PTLD…VPEA). The segment covering 664 to 677 (SPPPRPPPPPPLSP) has biased composition (pro residues).

This sequence belongs to the herpesviridae HHV-1 VP11/12 protein family. Interacts with VP16. Interacts with host LCK, PIK3R1, SHC1 AND GRB2; these interactions promote the activation of the PI3K/AKT pathway. Interacts with host YWHAB. Interacts with ICP0; this interaction targets UL46 for degradation by the proteasome. Post-translationally, phosphorylated by host LCK. The phosphorylation seems to be lymphocyte-specific.

It is found in the virion tegument. Its subcellular location is the host cell membrane. Functionally, plays a role in the activation of the host PI3K/AKT pathway to promote cell survival. Interacts with and activates host LCK and thereby recruits downstream partners SHC1, GRB2 and PI3KR1 in order to activate the PI3K pathway by phosphorylating host AKT on its activating residues. This mechanism is inhibited by the viral protein US3 that instead promotes incorporation of UL46 into virions. The polypeptide is Tegument protein UL46 (Human herpesvirus 1 (strain F) (HHV-1)).